We begin with the raw amino-acid sequence, 305 residues long: tRNA dimethylallyltransferase (305 aa).

14-21 (GPTTSGKT) provides a ligand contact to ATP. Substrate is bound at residue 16–21 (TTSGKT). 3 interaction with substrate tRNA regions span residues 39-42 (DSAL), 163-167 (QRITR), and 243-248 (RCVGYR).

This sequence belongs to the IPP transferase family. Monomer. The cofactor is Mg(2+).

The enzyme catalyses adenosine(37) in tRNA + dimethylallyl diphosphate = N(6)-dimethylallyladenosine(37) in tRNA + diphosphate. Catalyzes the transfer of a dimethylallyl group onto the adenine at position 37 in tRNAs that read codons beginning with uridine, leading to the formation of N6-(dimethylallyl)adenosine (i(6)A). This is tRNA dimethylallyltransferase from Ruthia magnifica subsp. Calyptogena magnifica.